We begin with the raw amino-acid sequence, 259 residues long: Protein unc-50 homolog (259 aa).

Met-1 is subject to N-acetylmethionine. Topologically, residues 1–82 (MLPSTSVNSL…TKDQWARDDP (82 aa)) are cytoplasmic. Ser-6 is modified (phosphoserine). Residues 83–103 (AFLVLLSIWLCVSTIGFGFVL) traverse the membrane as a helical segment. Topologically, residues 104-115 (DMGFFETIKLLL) are lumenal. A helical membrane pass occupies residues 116–136 (WVVLIDCVGVGLLIATLMWFI). The Cytoplasmic segment spans residues 137–163 (SNKYLVKRQSRDYDVEWGYAFDVHLNA). A helical membrane pass occupies residues 164–184 (FYPLLVILHFIQLFFINHVIL). At 185 to 187 (TDT) the chain is on the lumenal side. Residues 188-208 (FIGYLVGNTLWLVAVGYYIYV) traverse the membrane as a helical segment. The Cytoplasmic segment spans residues 209–222 (TFLGYSALPFLKNT). A helical membrane pass occupies residues 223–243 (VILLYPFAPLILLYGLSLALG). Residues 244–259 (WNFTHTLCSFYKYRVK) lie on the Lumenal side of the membrane.

The protein belongs to the unc-50 family. Present in periodontal ligament fibroblasts (at protein level).

The protein localises to the nucleus inner membrane. It localises to the golgi apparatus membrane. Its function is as follows. Involved in the cell surface expression of neuronal nicotinic receptors. Binds RNA. The chain is Protein unc-50 homolog (UNC50) from Homo sapiens (Human).